The chain runs to 193 residues: Large ribosomal subunit protein eL18 (193 aa).

The disordered stretch occupies residues His158 to Lys193. Over residues Ser183–Lys193 the composition is skewed to basic residues.

It belongs to the eukaryotic ribosomal protein eL18 family.

The protein resides in the cytoplasm. The sequence is that of Large ribosomal subunit protein eL18 (RPL18-A) from Trypanosoma brucei brucei (strain 927/4 GUTat10.1).